We begin with the raw amino-acid sequence, 220 residues long: MELNRMIDHTILKPEATEAAVQKIIDEAKEYNFFSVCINPCWVAFASEQLADTDVAVCTVIGFPLGANTPEVKAYEAADAIKNGANEVDMVINIGALKSQQYDYVRQDIQGVVDAAKGKALVKVIIETALLTDEEKVKACELAKEAGADFVKTSTGFSTGGAKVADIRLMRETVGPDMGVKASGGVHNAEEALAMIEAGATRIGASTGVAIVSGATGEGY.

Asp89 acts as the Proton donor/acceptor in catalysis. The Schiff-base intermediate with acetaldehyde role is filled by Lys152. The Proton donor/acceptor role is filled by Lys181.

Belongs to the DeoC/FbaB aldolase family. DeoC type 1 subfamily.

It is found in the cytoplasm. It carries out the reaction 2-deoxy-D-ribose 5-phosphate = D-glyceraldehyde 3-phosphate + acetaldehyde. Its pathway is carbohydrate degradation; 2-deoxy-D-ribose 1-phosphate degradation; D-glyceraldehyde 3-phosphate and acetaldehyde from 2-deoxy-alpha-D-ribose 1-phosphate: step 2/2. Functionally, catalyzes a reversible aldol reaction between acetaldehyde and D-glyceraldehyde 3-phosphate to generate 2-deoxy-D-ribose 5-phosphate. The polypeptide is Deoxyribose-phosphate aldolase (Enterococcus faecalis (strain ATCC 700802 / V583)).